Reading from the N-terminus, the 196-residue chain is Homeobox protein ANF-1 (196 aa).

The homeobox DNA-binding region spans 119–178 (GRRPRTAFTRNQIEVLENVFKMNSYPGIDIREELARKLDLEEDRIQIWFQNRRAKLKRSH).

This sequence belongs to the ANF homeobox family.

Its subcellular location is the nucleus. In terms of biological role, may be involved in the early patterning of the most anterior region of the main embryonic body axis. The protein is Homeobox protein ANF-1 of Gallus gallus (Chicken).